The sequence spans 191 residues: Putative NADH dehydrogenase/NAD(P)H nitroreductase (191 aa).

Ala-127–Gly-132 is an NAD(+) binding site.

Belongs to the nitroreductase family. Requires FMN as cofactor.

This Methanothermobacter thermautotrophicus (strain ATCC 29096 / DSM 1053 / JCM 10044 / NBRC 100330 / Delta H) (Methanobacterium thermoautotrophicum) protein is Putative NADH dehydrogenase/NAD(P)H nitroreductase.